Consider the following 224-residue polypeptide: MGQKVHPIGFRLGVIRSWDSKWYEEKNYAKWLHEDIKLREFVKEKLGQAGISRIEIERAANKVKINVHTARPGIVIGKRGAGIETIKKDLQGLTDNEVYLNVVEVRKAETDAQLVAENIATQLERRIAFRRAMKKSVQTALKFGAKGIRVACSGRLGGSEMARYEWYREGRVPLHTLRADIDYGFAEAKTTYGKIGCKVWIMRGEVLPQSAGARAPRTTGGARP.

Positions 38–106 constitute a KH type-2 domain; the sequence is LREFVKEKLG…EVYLNVVEVR (69 aa).

The protein belongs to the universal ribosomal protein uS3 family. Part of the 30S ribosomal subunit. Forms a tight complex with proteins S10 and S14.

In terms of biological role, binds the lower part of the 30S subunit head. Binds mRNA in the 70S ribosome, positioning it for translation. This is Small ribosomal subunit protein uS3 from Anaeromyxobacter dehalogenans (strain 2CP-C).